The following is a 42-amino-acid chain: Gastric inhibitory polypeptide (42 aa).

It belongs to the glucagon family.

It is found in the secreted. Potent stimulator of insulin secretion and relatively poor inhibitor of gastric acid secretion. The polypeptide is Gastric inhibitory polypeptide (GIP) (Bos taurus (Bovine)).